A 186-amino-acid chain; its full sequence is ATP synthase subunit b 3 (186 aa).

A helical membrane pass occupies residues leucine 5–phenylalanine 25.

It belongs to the ATPase B chain family. In terms of assembly, F-type ATPases have 2 components, F(1) - the catalytic core - and F(0) - the membrane proton channel. F(1) has five subunits: alpha(3), beta(3), gamma(1), delta(1), epsilon(1). F(0) has three main subunits: a(1), b(2) and c(10-14). The alpha and beta chains form an alternating ring which encloses part of the gamma chain. F(1) is attached to F(0) by a central stalk formed by the gamma and epsilon chains, while a peripheral stalk is formed by the delta and b chains.

The protein localises to the cell inner membrane. F(1)F(0) ATP synthase produces ATP from ADP in the presence of a proton or sodium gradient. F-type ATPases consist of two structural domains, F(1) containing the extramembraneous catalytic core and F(0) containing the membrane proton channel, linked together by a central stalk and a peripheral stalk. During catalysis, ATP synthesis in the catalytic domain of F(1) is coupled via a rotary mechanism of the central stalk subunits to proton translocation. Its function is as follows. Component of the F(0) channel, it forms part of the peripheral stalk, linking F(1) to F(0). The protein is ATP synthase subunit b 3 of Dinoroseobacter shibae (strain DSM 16493 / NCIMB 14021 / DFL 12).